Consider the following 270-residue polypeptide: Photosystem I chlorophyll a/b-binding protein 6, chloroplastic (270 aa).

Residues 1-33 constitute a chloroplast transit peptide; sequence MAFAIASALTSTLTLSTSRVQNPTQRRPHVAST. The interval 16–36 is disordered; it reads STSRVQNPTQRRPHVASTSST. Positions 19 to 36 are enriched in polar residues; the sequence is RVQNPTQRRPHVASTSST. Trp68 is a binding site for chlorophyll b. Chlorophyll a contacts are provided by Phe88 and Glu107. Chlorophyll b is bound at residue Arg112. The helical transmembrane segment at 146–164 threads the bilayer; sequence YFADSTTLFVAQMVLMGWA. Residues Glu165 and Arg168 each contribute to the chlorophyll b site. Chlorophyll a is bound by residues Lys221, Glu222, Asn225, Arg227, Gln239, and His254. The helical transmembrane segment at 228–244 threads the bilayer; that stretch reads LAMLAFLGFCFQATYTS.

Belongs to the light-harvesting chlorophyll a/b-binding (LHC) protein family. In terms of assembly, the LHC complex consists of chlorophyll a-b binding proteins. Homodimer. Binds pigments. Element of the NAD(P)H dehydrogenase-photosystem I supercomplex (NDH-PSI). The cofactor is Binds at least 14 chlorophylls (8 Chl-a and 6 Chl-b) and carotenoids such as lutein and neoxanthin.. Post-translationally, photoregulated by reversible phosphorylation of its threonine residues.

The protein resides in the plastid. It localises to the chloroplast thylakoid membrane. In terms of biological role, the light-harvesting complex (LHC) functions as a light receptor, it captures and delivers excitation energy to photosystems with which it is closely associated. Seems involved in the function of the photosystem I in low light conditions, when other LHCA proteins are less abundant. Required, together with LHCA5, for the formation of a full-size NAD(P)H dehydrogenase-photosystem I supercomplex (NDH-PSI) that triggers cyclic and chlororespiratory electron transport in chloroplast thylakoids, especially under stress conditions (e.g. increased light intensity). The protein is Photosystem I chlorophyll a/b-binding protein 6, chloroplastic of Arabidopsis thaliana (Mouse-ear cress).